We begin with the raw amino-acid sequence, 466 residues long: Ribulose bisphosphate carboxylase large chain (466 aa).

Lysine 5 carries the post-translational modification N6,N6,N6-trimethyllysine. Asparagine 114 and threonine 164 together coordinate substrate. Lysine 166 serves as the catalytic Proton acceptor. Lysine 168 lines the substrate pocket. Mg(2+) is bound by residues lysine 192, aspartate 194, and glutamate 195. Position 192 is an N6-carboxylysine (lysine 192). The active-site Proton acceptor is histidine 285. Substrate-binding residues include arginine 286, histidine 318, and serine 370.

This sequence belongs to the RuBisCO large chain family. Type I subfamily. In terms of assembly, heterohexadecamer of 8 large chains and 8 small chains; disulfide-linked. The disulfide link is formed within the large subunit homodimers. Mg(2+) is required as a cofactor. The disulfide bond which can form in the large chain dimeric partners within the hexadecamer appears to be associated with oxidative stress and protein turnover.

It is found in the plastid. It localises to the chloroplast. It catalyses the reaction 2 (2R)-3-phosphoglycerate + 2 H(+) = D-ribulose 1,5-bisphosphate + CO2 + H2O. The enzyme catalyses D-ribulose 1,5-bisphosphate + O2 = 2-phosphoglycolate + (2R)-3-phosphoglycerate + 2 H(+). Its function is as follows. RuBisCO catalyzes two reactions: the carboxylation of D-ribulose 1,5-bisphosphate, the primary event in carbon dioxide fixation, as well as the oxidative fragmentation of the pentose substrate in the photorespiration process. Both reactions occur simultaneously and in competition at the same active site. The polypeptide is Ribulose bisphosphate carboxylase large chain (Silene gallica (Common catchfly)).